The chain runs to 413 residues: Arginine biosynthesis bifunctional protein ArgJ (413 aa).

Substrate contacts are provided by Thr158, Lys184, Thr195, Glu285, Asn408, and Ser413. Thr195 acts as the Nucleophile in catalysis.

It belongs to the ArgJ family. As to quaternary structure, heterotetramer of two alpha and two beta chains.

The protein resides in the cytoplasm. The catalysed reaction is N(2)-acetyl-L-ornithine + L-glutamate = N-acetyl-L-glutamate + L-ornithine. It carries out the reaction L-glutamate + acetyl-CoA = N-acetyl-L-glutamate + CoA + H(+). It functions in the pathway amino-acid biosynthesis; L-arginine biosynthesis; L-ornithine and N-acetyl-L-glutamate from L-glutamate and N(2)-acetyl-L-ornithine (cyclic): step 1/1. Its pathway is amino-acid biosynthesis; L-arginine biosynthesis; N(2)-acetyl-L-ornithine from L-glutamate: step 1/4. Catalyzes two activities which are involved in the cyclic version of arginine biosynthesis: the synthesis of N-acetylglutamate from glutamate and acetyl-CoA as the acetyl donor, and of ornithine by transacetylation between N(2)-acetylornithine and glutamate. The protein is Arginine biosynthesis bifunctional protein ArgJ of Rhizobium meliloti (strain 1021) (Ensifer meliloti).